The sequence spans 113 residues: Putative membrane protein insertion efficiency factor (113 aa).

The protein belongs to the UPF0161 family.

Its subcellular location is the cell inner membrane. In terms of biological role, could be involved in insertion of integral membrane proteins into the membrane. The protein is Putative membrane protein insertion efficiency factor of Campylobacter jejuni subsp. doylei (strain ATCC BAA-1458 / RM4099 / 269.97).